The primary structure comprises 60 residues: Cytotoxin 7 (60 aa).

Disulfide bonds link Cys-3/Cys-21, Cys-14/Cys-38, Cys-42/Cys-53, and Cys-54/Cys-59.

It belongs to the three-finger toxin family. Short-chain subfamily. Type IA cytotoxin sub-subfamily. In terms of assembly, monomer in solution; Homodimer and oligomer in the presence of negatively charged lipids forming a pore with a size ranging between 20 and 30 Angstroms. As to expression, expressed by the venom gland.

Its subcellular location is the secreted. It localises to the target cell membrane. In terms of biological role, shows cytolytic activity on many different cells by forming pore in lipid membranes. In vivo, increases heart rate or kills the animal by cardiac arrest. In addition, it binds to heparin with high affinity, interacts with Kv channel-interacting protein 1 (KCNIP1) in a calcium-independent manner, and binds to integrin alpha-V/beta-3 (ITGAV/ITGB3) with moderate affinity. Preferentially binds acidic phospholipids like phosphatidylserine, phosphatidic acid and phosphatidyl glycerol. Has hemolytic activity towards human erythrocytes (EC(50)=0.171 uM) and cytolytic activity towards various cell lines. The polypeptide is Cytotoxin 7 (Naja naja (Indian cobra)).